Consider the following 105-residue polypeptide: Putative zinc finger protein 861 (105 aa).

A C2H2-type zinc finger spans residues 75–97 (YTCKPCGNAFRFHHSFHIHERPH).

This is Putative zinc finger protein 861 (ZNF861P) from Homo sapiens (Human).